Consider the following 164-residue polypeptide: General odorant-binding protein 1 (164 aa).

The signal sequence occupies residues 1 to 18 (MWKLVVVLTVNLLQGALT). 3 cysteine pairs are disulfide-bonded: Cys37–Cys72, Cys68–Cys126, and Cys115–Cys135.

The protein belongs to the PBP/GOBP family. Homodimer. As to expression, antenna.

Present in the aqueous fluid surrounding olfactory sensory dendrites and are thought to aid in the capture and transport of hydrophobic odorants into and through this fluid. This chain is General odorant-binding protein 1, found in Bombyx mori (Silk moth).